We begin with the raw amino-acid sequence, 27 residues long: Protein YqfI (27 aa).

This is Protein YqfI from Escherichia coli (strain K12).